Here is an 87-residue protein sequence, read N- to C-terminus: U3-theraphotoxin-Hhn1a 6 (87 aa).

A signal peptide spans 1 to 24 (MVNMKASMFLTFAGLVLLFVVCYA). A propeptide spanning residues 25–52 (SESEKKEFPKEMLSSIFAVDNDFKQEER) is cleaved from the precursor. Disulfide bonds link cysteine 54–cysteine 67, cysteine 61–cysteine 72, and cysteine 66–cysteine 79.

It belongs to the neurotoxin 10 (Hwtx-1) family. 51 (Hntx-8) subfamily. Hntx-8 sub-subfamily. In terms of tissue distribution, expressed by the venom gland.

It is found in the secreted. In terms of biological role, ion channel inhibitor. This is U3-theraphotoxin-Hhn1a 6 from Cyriopagopus hainanus (Chinese bird spider).